A 413-amino-acid polypeptide reads, in one-letter code: Lamin tail domain-containing protein 1 (413 aa).

Disordered regions lie at residues 1-25 and 102-128; these read MMKE…VQDG and HKDS…SDVD. Positions 107–128 are enriched in polar residues; it reads LGKQSTSSMVPRRQPQSSSDVD. One can recognise an LTD domain in the interval 169–287; the sequence is EVGQFTSSSL…EAIAWYTPIH (119 aa). The segment at 356 to 413 is disordered; that stretch reads LPNKSPWCRNPNTSPHPYSSLIDSHDSDISESSLDTQLKPQPTKPKPDPGTKKKKAKS. Residues 385-396 are compositionally biased toward low complexity; the sequence is SESSLDTQLKPQ.

This sequence belongs to the intermediate filament family.

This chain is Lamin tail domain-containing protein 1 (Lmntd1), found in Mus musculus (Mouse).